A 440-amino-acid chain; its full sequence is Thymidine phosphorylase (440 aa).

This sequence belongs to the thymidine/pyrimidine-nucleoside phosphorylase family. In terms of assembly, homodimer.

It catalyses the reaction thymidine + phosphate = 2-deoxy-alpha-D-ribose 1-phosphate + thymine. It functions in the pathway pyrimidine metabolism; dTMP biosynthesis via salvage pathway; dTMP from thymine: step 1/2. Its function is as follows. The enzymes which catalyze the reversible phosphorolysis of pyrimidine nucleosides are involved in the degradation of these compounds and in their utilization as carbon and energy sources, or in the rescue of pyrimidine bases for nucleotide synthesis. In Yersinia pseudotuberculosis serotype O:1b (strain IP 31758), this protein is Thymidine phosphorylase.